A 421-amino-acid polypeptide reads, in one-letter code: Serine hydroxymethyltransferase (421 aa).

(6S)-5,6,7,8-tetrahydrofolate is bound by residues Leu-123 and 127–129 (GHL). Lys-232 carries the post-translational modification N6-(pyridoxal phosphate)lysine.

The protein belongs to the SHMT family. In terms of assembly, homodimer. The cofactor is pyridoxal 5'-phosphate.

It localises to the cytoplasm. It catalyses the reaction (6R)-5,10-methylene-5,6,7,8-tetrahydrofolate + glycine + H2O = (6S)-5,6,7,8-tetrahydrofolate + L-serine. The protein operates within one-carbon metabolism; tetrahydrofolate interconversion. Its pathway is amino-acid biosynthesis; glycine biosynthesis; glycine from L-serine: step 1/1. Its function is as follows. Catalyzes the reversible interconversion of serine and glycine with tetrahydrofolate (THF) serving as the one-carbon carrier. This reaction serves as the major source of one-carbon groups required for the biosynthesis of purines, thymidylate, methionine, and other important biomolecules. Also exhibits THF-independent aldolase activity toward beta-hydroxyamino acids, producing glycine and aldehydes, via a retro-aldol mechanism. This is Serine hydroxymethyltransferase from Ehrlichia ruminantium (strain Gardel).